The chain runs to 354 residues: Inactive ADP-ribosyltransferase ARH2 (354 aa).

A Phosphoserine modification is found at Ser-27.

This sequence belongs to the ADP-ribosylglycohydrolase family.

It localises to the cytoplasm. The protein resides in the myofibril. The protein localises to the sarcomere. Its function is as follows. Required for myofibril assembly and outgrowth of the cardiac chambers in the developing heart. Appears to be catalytically inactive, showing no activity against O-acetyl-ADP-ribose. The sequence is that of Inactive ADP-ribosyltransferase ARH2 (ADPRHL1) from Homo sapiens (Human).